Consider the following 380-residue polypeptide: Homoserine O-acetyltransferase (380 aa).

Residues 70-366 enclose the AB hydrolase-1 domain; the sequence is NAVLVFHALT…SPHGHDAFLI (297 aa). Serine 186 functions as the Nucleophile in the catalytic mechanism. Arginine 250 serves as a coordination point for substrate. Catalysis depends on residues aspartate 333 and histidine 361. A substrate-binding site is contributed by aspartate 362.

It belongs to the AB hydrolase superfamily. MetX family. Homodimer.

It is found in the cytoplasm. It carries out the reaction L-homoserine + acetyl-CoA = O-acetyl-L-homoserine + CoA. It functions in the pathway amino-acid biosynthesis; L-methionine biosynthesis via de novo pathway; O-acetyl-L-homoserine from L-homoserine: step 1/1. In terms of biological role, transfers an acetyl group from acetyl-CoA to L-homoserine, forming acetyl-L-homoserine. The sequence is that of Homoserine O-acetyltransferase from Thermus thermophilus (strain ATCC BAA-163 / DSM 7039 / HB27).